The chain runs to 316 residues: uncharacterized protein (316 aa).

A helical transmembrane segment spans residues 12 to 34; sequence RWVCLTSVILFCFCIAVMRYGGV.

The protein resides in the membrane. This is an uncharacterized protein from Treponema pallidum (strain Nichols).